Reading from the N-terminus, the 593-residue chain is Probable tripeptidyl-peptidase SED3 (593 aa).

The signal sequence occupies residues 1-18 (MLLRWHSVIPLFLTMTVA). Positions 19 to 198 (LPNTYRTVVE…SLQVIYSSTN (180 aa)) are cleaved as a propeptide — removed in mature form. Residues asparagine 198, asparagine 204, asparagine 261, and asparagine 275 are each glycosylated (N-linked (GlcNAc...) asparagine). Positions 206-592 (TITPRCLREL…RILAKIVQHM (387 aa)) constitute a Peptidase S53 domain. Active-site charge relay system residues include glutamate 282 and aspartate 286. Residue asparagine 295 is glycosylated (N-linked (GlcNAc...) asparagine). Serine 496 (charge relay system) is an active-site residue. Residues aspartate 538 and isoleucine 539 each coordinate Ca(2+). 2 N-linked (GlcNAc...) asparagine glycosylation sites follow: asparagine 554 and asparagine 566. Positions 570 and 572 each coordinate Ca(2+).

Ca(2+) serves as cofactor.

The protein resides in the secreted. It is found in the extracellular space. It carries out the reaction Release of an N-terminal tripeptide from a polypeptide.. Functionally, secreted tripeptidyl-peptidase which degrades proteins at acidic pHs and is involved in virulence. This is Probable tripeptidyl-peptidase SED3 (SED3) from Trichophyton verrucosum (strain HKI 0517).